Here is a 108-residue protein sequence, read N- to C-terminus: Iron-sulfur cluster assembly protein CyaY (108 aa).

This sequence belongs to the frataxin family.

Its function is as follows. Involved in iron-sulfur (Fe-S) cluster assembly. May act as a regulator of Fe-S biogenesis. The protein is Iron-sulfur cluster assembly protein CyaY of Pseudoalteromonas atlantica (strain T6c / ATCC BAA-1087).